Consider the following 332-residue polypeptide: Ribosomal RNA small subunit methyltransferase H (332 aa).

Residues 36–38 (GGY), Asp54, Phe81, Asp102, and Gln109 contribute to the S-adenosyl-L-methionine site.

It belongs to the methyltransferase superfamily. RsmH family.

Its subcellular location is the cytoplasm. The catalysed reaction is cytidine(1402) in 16S rRNA + S-adenosyl-L-methionine = N(4)-methylcytidine(1402) in 16S rRNA + S-adenosyl-L-homocysteine + H(+). Its function is as follows. Specifically methylates the N4 position of cytidine in position 1402 (C1402) of 16S rRNA. The sequence is that of Ribosomal RNA small subunit methyltransferase H from Nitrobacter winogradskyi (strain ATCC 25391 / DSM 10237 / CIP 104748 / NCIMB 11846 / Nb-255).